Consider the following 317-residue polypeptide: Transaldolase A (317 aa).

The Schiff-base intermediate with substrate role is filled by lysine 132.

Belongs to the transaldolase family. Type 1 subfamily. In terms of assembly, homodimer.

The protein localises to the cytoplasm. It carries out the reaction D-sedoheptulose 7-phosphate + D-glyceraldehyde 3-phosphate = D-erythrose 4-phosphate + beta-D-fructose 6-phosphate. Its pathway is carbohydrate degradation; pentose phosphate pathway; D-glyceraldehyde 3-phosphate and beta-D-fructose 6-phosphate from D-ribose 5-phosphate and D-xylulose 5-phosphate (non-oxidative stage): step 2/3. Functionally, transaldolase is important for the balance of metabolites in the pentose-phosphate pathway. The chain is Transaldolase A (talA) from Pasteurella multocida (strain Pm70).